The primary structure comprises 408 residues: L-lactate oxidase (408 aa).

In terms of domain architecture, FMN hydroxy acid dehydrogenase spans 14-370; it reads NEAIKMVNVD…KHADIRQINY (357 aa). Tyr40 contacts pyruvate. Residues 93–95, Ser122, and Gln144 contribute to the FMN site; that span reads PIA. Tyr146 contributes to the pyruvate binding site. Thr172 lines the FMN pocket. Arg181 serves as a coordination point for pyruvate. 2 residues coordinate FMN: Lys241 and Ser263. His265 and Arg268 together coordinate pyruvate. Catalysis depends on His265, which acts as the Proton acceptor. FMN-binding positions include 296 to 300 and Arg320; that span reads DSGVR.

This sequence belongs to the FMN-dependent alpha-hydroxy acid dehydrogenase family. In terms of assembly, homotetramer. The cofactor is FMN.

The enzyme catalyses a (2S)-2-hydroxycarboxylate + O2 = a 2-oxocarboxylate + H2O2. It catalyses the reaction (S)-lactate + O2 = pyruvate + H2O2. The catalysed reaction is 2-hydroxyoctanoate + O2 = 2-oxooctanoate + H2O2. It carries out the reaction glycolate + O2 = glyoxylate + H2O2. The enzyme catalyses mandelate + O2 = phenylglyoxylate + H2O2. It catalyses the reaction 2-hydroxyoctadecanoate + O2 = 2-oxooctadecanoate + H2O2. Its function is as follows. Oxidase that catalyzes the oxidation of a broad range of 2-hydroxyacids in vitro, such as (S)-lactate, 2-hydroxyoctanoate, and to a lesser extent glycolate, mandelate and 2-hydroxyoctadecanoate, to the corresponding 2-oxoacids, with a reduction of O2 to H2O2. May be involved in the utilization of L-lactate as an energy source for growth. This chain is L-lactate oxidase, found in Lactobacillus jensenii.